We begin with the raw amino-acid sequence, 162 residues long: Transcription antitermination protein NusB (162 aa).

This sequence belongs to the NusB family.

Functionally, involved in transcription antitermination. Required for transcription of ribosomal RNA (rRNA) genes. Binds specifically to the boxA antiterminator sequence of the ribosomal RNA (rrn) operons. This is Transcription antitermination protein NusB from Xanthomonas euvesicatoria pv. vesicatoria (strain 85-10) (Xanthomonas campestris pv. vesicatoria).